A 240-amino-acid chain; its full sequence is MVRIDKRSNTDLRPVKITRKYLKYPLGSVLIEMGETKVICTVSMEEKVPPFLKGTNQGWLTAEYGMLPGSTPERKVRDVVKGAINGRSQEIQRLIGRSLRAVVDFSKLGERTIWIDADVIQADGGTRTAAITGAFVALYDALEKLKREGIIKEIPIREFVAAVSVGIVDGEILLDLSANEDMRAEVDMNVVMTESGKFVEIQGTAEKTPFTHEQLQHMLNLAKQGIMRLIEIQKKTLGLL.

Residues R87 and 125–127 (GTR) contribute to the phosphate site.

The protein belongs to the RNase PH family. Homohexameric ring arranged as a trimer of dimers.

It carries out the reaction tRNA(n+1) + phosphate = tRNA(n) + a ribonucleoside 5'-diphosphate. Functionally, phosphorolytic 3'-5' exoribonuclease that plays an important role in tRNA 3'-end maturation. Removes nucleotide residues following the 3'-CCA terminus of tRNAs; can also add nucleotides to the ends of RNA molecules by using nucleoside diphosphates as substrates, but this may not be physiologically important. Probably plays a role in initiation of 16S rRNA degradation (leading to ribosome degradation) during starvation. The polypeptide is Ribonuclease PH (Dictyoglomus turgidum (strain DSM 6724 / Z-1310)).